The primary structure comprises 234 residues: N-acetyl-alpha-D-glucosaminyl L-malate deacetylase 1 (234 aa).

Positions 12, 15, and 113 each coordinate Zn(2+).

The protein belongs to the PIGL family. Zn(2+) serves as cofactor.

It catalyses the reaction (S)-malyl N-acetyl-alpha-D-glucosaminide + H2O = (S)-malyl alpha-D-glucosaminide + acetate. Inhibited by BSH. Functionally, involved in bacillithiol (BSH) biosynthesis. Catalyzes the second step of the pathway, the deacetylation of N-acetylglucosaminylmalate (GlcNAc-Mal) to glucosamine malate (GlcN-Mal). This Bacillus anthracis protein is N-acetyl-alpha-D-glucosaminyl L-malate deacetylase 1.